The following is a 599-amino-acid chain: Sulfite reductase [NADPH] flavoprotein alpha-component (599 aa).

Residues 64–202 (ITLISASQTG…VAAQWRARIV (139 aa)) enclose the Flavodoxin-like domain. Residues 70–75 (SQTGNA), 117–120 (STQG), and 153–162 (LGDTSYEFFC) contribute to the FMN site. One can recognise an FAD-binding FR-type domain in the interval 234–448 (EAPLRASLSV…IEHNDNFRLP (215 aa)). FAD contacts are provided by residues T322, A356, 386 to 389 (RLYS), 404 to 406 (TVG), Y410, and 419 to 422 (GGAS). NADP(+)-binding positions include 519 to 520 (SR), 525 to 529 (KIYVQ), and D561. Y599 serves as a coordination point for FAD.

The protein belongs to the NADPH-dependent sulphite reductase flavoprotein subunit CysJ family. In the N-terminal section; belongs to the flavodoxin family. This sequence in the C-terminal section; belongs to the flavoprotein pyridine nucleotide cytochrome reductase family. Alpha(8)-beta(8). The alpha component is a flavoprotein, the beta component is a hemoprotein. FAD is required as a cofactor. FMN serves as cofactor.

It carries out the reaction hydrogen sulfide + 3 NADP(+) + 3 H2O = sulfite + 3 NADPH + 4 H(+). Its pathway is sulfur metabolism; hydrogen sulfide biosynthesis; hydrogen sulfide from sulfite (NADPH route): step 1/1. Functionally, component of the sulfite reductase complex that catalyzes the 6-electron reduction of sulfite to sulfide. This is one of several activities required for the biosynthesis of L-cysteine from sulfate. The flavoprotein component catalyzes the electron flow from NADPH -&gt; FAD -&gt; FMN to the hemoprotein component. The sequence is that of Sulfite reductase [NADPH] flavoprotein alpha-component from Salmonella arizonae (strain ATCC BAA-731 / CDC346-86 / RSK2980).